Here is a 568-residue protein sequence, read N- to C-terminus: Proline--tRNA ligase (568 aa).

This sequence belongs to the class-II aminoacyl-tRNA synthetase family. ProS type 1 subfamily. Homodimer.

The protein localises to the cytoplasm. It carries out the reaction tRNA(Pro) + L-proline + ATP = L-prolyl-tRNA(Pro) + AMP + diphosphate. Catalyzes the attachment of proline to tRNA(Pro) in a two-step reaction: proline is first activated by ATP to form Pro-AMP and then transferred to the acceptor end of tRNA(Pro). As ProRS can inadvertently accommodate and process non-cognate amino acids such as alanine and cysteine, to avoid such errors it has two additional distinct editing activities against alanine. One activity is designated as 'pretransfer' editing and involves the tRNA(Pro)-independent hydrolysis of activated Ala-AMP. The other activity is designated 'posttransfer' editing and involves deacylation of mischarged Ala-tRNA(Pro). The misacylated Cys-tRNA(Pro) is not edited by ProRS. This is Proline--tRNA ligase from Lysinibacillus sphaericus (strain C3-41).